The sequence spans 143 residues: Large ribosomal subunit protein uL13 (143 aa).

Belongs to the universal ribosomal protein uL13 family. Part of the 50S ribosomal subunit.

Its function is as follows. This protein is one of the early assembly proteins of the 50S ribosomal subunit, although it is not seen to bind rRNA by itself. It is important during the early stages of 50S assembly. In Dehalococcoides mccartyi (strain ATCC BAA-2100 / JCM 16839 / KCTC 5957 / BAV1), this protein is Large ribosomal subunit protein uL13.